Reading from the N-terminus, the 192-residue chain is Ion-translocating oxidoreductase complex subunit B (192 aa).

A hydrophobic region spans residues 1–26 (MNAIWIAVAAVSLLGLAFGAILGYAS). In terms of domain architecture, 4Fe-4S spans 32 to 91 (EDDPVVEKIDEILPQSQCGQCGYPGCRPYAEAISCNGEKINRCAPGGEAVMLKIAELLNV). 12 residues coordinate [4Fe-4S] cluster: Cys-49, Cys-52, Cys-57, Cys-74, Cys-117, Cys-120, Cys-123, Cys-127, Cys-147, Cys-150, Cys-153, and Cys-157. 4Fe-4S ferredoxin-type domains follow at residues 108 to 137 (MVAFIDENNCIGCTKCIQACPVDAIVGATR) and 138 to 167 (AMHTVMSDLCTGCNLCVDPCPTHCISLQPV).

The protein belongs to the 4Fe4S bacterial-type ferredoxin family. RnfB subfamily. As to quaternary structure, the complex is composed of six subunits: RsxA, RsxB, RsxC, RsxD, RsxE and RsxG. [4Fe-4S] cluster is required as a cofactor.

It localises to the cell inner membrane. Functionally, part of a membrane-bound complex that couples electron transfer with translocation of ions across the membrane. Required to maintain the reduced state of SoxR. The chain is Ion-translocating oxidoreductase complex subunit B from Escherichia coli O17:K52:H18 (strain UMN026 / ExPEC).